A 540-amino-acid chain; its full sequence is Signal peptide peptidase-like 2 (540 aa).

The first 27 residues, 1–27 (MDSLRFLRILLLSSSILLLSLRSTVTA), serve as a signal peptide directing secretion. The Lumenal segment spans residues 28–196 (GDIVHQDNLA…PRRPAVDVAE (169 aa)). N83 carries N-linked (GlcNAc...) asparagine glycosylation. The 79-residue stretch at 95-173 (SCTPLKNKLS…QDAGASLQKM (79 aa)) folds into the PA domain. An N-linked (GlcNAc...) asparagine glycan is attached at N176. The helical transmembrane segment at 197-217 (VFLWLMAIGTILCASYWSAWS) threads the bilayer. The Cytoplasmic portion of the chain corresponds to 218–248 (AREAAIEHDKLLKDAIDEIPNTNDGGSGVVE). The helical transmembrane segment at 249–269 (INSISAIFFVVLASGFLVILY) threads the bilayer. Over 270–278 (KLMSYWFVE) the chain is Lumenal. A helical membrane pass occupies residues 279-299 (LLVVVFCIGGVEGLQTCLVAL). At 300-319 (LSRWFQRAADTYVKVPFLGP) the chain is on the cytoplasmic side. A helical membrane pass occupies residues 320 to 340 (ISYLTLAVSPFCIVFAVLWAV). Residues 341–345 (YRVHS) are Lumenal-facing. The helical transmembrane segment at 346-366 (FAWIGQDVLGIALIITVLQIV) threads the bilayer. Residues 367 to 370 (HVPN) are Cytoplasmic-facing. A helical membrane pass occupies residues 371–391 (LKVGTVLLSCAFLYDIFWVFV). The active site involves D385. Over 392 to 429 (SKKLFHESVMIVVARGDKSGEDGIPMLLKIPRMFDPWG) the chain is Lumenal. The chain crosses the membrane as a helical span at residues 430-450 (GYSIIGFGDILLPGLLIAFAL). The active site involves D438. At 451 to 462 (RYDWLANKTLRT) the chain is on the cytoplasmic side. The helical transmembrane segment at 463-483 (GYFIWAMVAYGLGLLITYVAL) threads the bilayer. Topologically, residues 484–488 (NLMDG) are lumenal. A helical transmembrane segment spans residues 489 to 509 (HGQPALLYIVPFTLGTMLTLA). The short motif at 492–494 (PAL) is the PAL element. Residues 510-540 (RKRDDLWILWTKGEPERACPHHVRLEQCSEK) are Cytoplasmic-facing.

The protein belongs to the peptidase A22B family. Glycosylated. Ubiquitous.

The protein localises to the endosome membrane. In terms of biological role, intramembrane-cleaving aspartic protease (I-CLiP) that cleaves type II membrane signal peptides in the hydrophobic plane of the membrane. This Arabidopsis thaliana (Mouse-ear cress) protein is Signal peptide peptidase-like 2 (SPPL2).